Reading from the N-terminus, the 718-residue chain is MESLRTEQMLSLPAEVSSNNLEPAERGASAAQVDMGPHREAAAESPAPLPTREPEQEQSPGTSTPESKVLLTQADALASRGRIREALEVYRQLSERQQLVAEQLEQLVRCLAEKVPQGEALAPAPPGEGSTASGAVAAEETGAAAAAAATEVWDGFKCRKCHGFLSDPVSLSCGHTFCKLCLERGRAADRRCALCGVKLSALMVATGRARGSRRAGQQPPPPLRVNVVLSGLLGKLFPGPARASQLRHEGNRLYRERQVEAALLKYNEAVKLAPNDHLLYSNRSQIYFTLESHENALHDAEIACKLRPMGFKDNLELPHCSSQEEAAARGDGSSLMDPAKVKGDGQQHHMKDQEEEEEKWDATSPKAASSKTGKCQEKKRKHCQIESQEDTGMPNKASKQDPPTDQGDKPALSLPLASFDASDLECALCMRLFYEPVTTPCGHTFCLKCLERCLDHNAKCPLCKDGLSQCLASRKYSKNVIMEELIAKFLPEELKERRKLYEEEMEELSNLNKNVPIFVCTMAYPTVPCPLHIFEPCYRLMIRRCIETGTRQFGMCLGDPVKGFAEYGCILEIRNVQFFADGRSVVDSIGKRRFRVLHQSQRDGYNTADIEYIEDQKVQGEDCAELMGLHNCVYQQASLWFHSLKSSLKNRILNHFGPMPEKDADPQMNPNGPAWCWWMLAVLPLESRAQLPFLAMRSLKDRLNGIRRVLAFISRNQN.

The segment at 1–69 is disordered; the sequence is MESLRTEQML…PGTSTPESKV (69 aa). Polar residues predominate over residues 57 to 66; that stretch reads EQSPGTSTPE. A TPR 1 repeat occupies 67–100; it reads SKVLLTQADALASRGRIREALEVYRQLSERQQLV. An RING-type 1 zinc finger spans residues 158–196; sequence CRKCHGFLSDPVSLSCGHTFCKLCLERGRAADRRCALCG. TPR repeat units lie at residues 243–276 and 278–310; these read ASQL…APND and LLYS…RPMG. Residues 322-413 are disordered; the sequence is SQEEAAARGD…TDQGDKPALS (92 aa). Positions 339 to 352 are enriched in basic and acidic residues; sequence AKVKGDGQQHHMKD. The segment at 426–464 adopts an RING-type 2 zinc-finger fold; the sequence is CALCMRLFYEPVTTPCGHTFCLKCLERCLDHNAKCPLCK. The Lon N-terminal domain maps to 505–714; it reads MEELSNLNKN…GIRRVLAFIS (210 aa).

The sequence is that of LON peptidase N-terminal domain and RING finger protein 3 (LONRF3) from Macaca fascicularis (Crab-eating macaque).